Consider the following 179-residue polypeptide: Large ribosomal subunit protein uL5 (179 aa).

This sequence belongs to the universal ribosomal protein uL5 family. Part of the 50S ribosomal subunit; part of the 5S rRNA/L5/L18/L25 subcomplex. Contacts the 5S rRNA and the P site tRNA. Forms a bridge to the 30S subunit in the 70S ribosome.

In terms of biological role, this is one of the proteins that bind and probably mediate the attachment of the 5S RNA into the large ribosomal subunit, where it forms part of the central protuberance. In the 70S ribosome it contacts protein S13 of the 30S subunit (bridge B1b), connecting the 2 subunits; this bridge is implicated in subunit movement. Contacts the P site tRNA; the 5S rRNA and some of its associated proteins might help stabilize positioning of ribosome-bound tRNAs. The sequence is that of Large ribosomal subunit protein uL5 from Desulfotalea psychrophila (strain LSv54 / DSM 12343).